Reading from the N-terminus, the 83-residue chain is uncharacterized protein (83 aa).

This is an uncharacterized protein from Rickettsia prowazekii (strain Madrid E).